The following is an 862-amino-acid chain: Protein sey1 (862 aa).

Over 1 to 741 the chain is Cytoplasmic; that stretch reads MMNAHFAGVG…KRGAIGGLSQ (741 aa). In terms of domain architecture, GB1/RHD3-type G spans 48 to 298; that stretch reads GFNYHLISVF…IPADGFSAYA (251 aa). 58–65 is a binding site for GTP; that stretch reads GSQSTGKS. Positions 473 to 499 form a coiled coil; it reads SSHENELKIYKKELDDVSGRLRKEEMR. The tract at residues 524–543 is disordered; it reads LGSGRGGSGAPEHGDRPPTE. The chain crosses the membrane as a helical span at residues 742–762; sequence IPFWLYPAMLALGWNEIVAVL. At 763–765 the chain is on the lumenal side; that stretch reads RNP. The helical transmembrane segment at 766–786 threads the bilayer; that stretch reads IYFIFLILLAVAAYVTYTLNL. The Cytoplasmic segment spans residues 787 to 862; it reads WGPIMRVANA…KSMEEDLDDI (76 aa). A disordered region spans residues 821-862; that stretch reads QAMAMSGSGDSNSTRRYEDVKMDRLNGDGKKSKSMEEDLDDI. Positions 833–856 are enriched in basic and acidic residues; the sequence is STRRYEDVKMDRLNGDGKKSKSME.

Belongs to the TRAFAC class dynamin-like GTPase superfamily. GB1/RHD3 GTPase family. RHD3 subfamily.

The protein localises to the endoplasmic reticulum membrane. Cooperates with the reticulon proteins and tubule-shaping DP1 family proteins to generate and maintain the structure of the tubular endoplasmic reticulum network. Has GTPase activity, which is required for its function in ER organization. The chain is Protein sey1 (sey1) from Pyrenophora tritici-repentis (strain Pt-1C-BFP) (Wheat tan spot fungus).